Here is a 1031-residue protein sequence, read N- to C-terminus: Error-prone DNA polymerase (1031 aa).

This sequence belongs to the DNA polymerase type-C family. DnaE2 subfamily.

Its subcellular location is the cytoplasm. It catalyses the reaction DNA(n) + a 2'-deoxyribonucleoside 5'-triphosphate = DNA(n+1) + diphosphate. Functionally, DNA polymerase involved in damage-induced mutagenesis and translesion synthesis (TLS). It is not the major replicative DNA polymerase. This Pseudomonas savastanoi pv. phaseolicola (strain 1448A / Race 6) (Pseudomonas syringae pv. phaseolicola (strain 1448A / Race 6)) protein is Error-prone DNA polymerase.